The sequence spans 354 residues: 5,10-methenyltetrahydromethanopterin hydrogenase (354 aa).

This sequence belongs to the HMD family.

The enzyme catalyses 5,10-methenyl-5,6,7,8-tetrahydromethanopterin + H2 = 5,10-methylenetetrahydromethanopterin + H(+). Its pathway is one-carbon metabolism; methanogenesis from CO(2); 5,10-methylene-5,6,7,8-tetrahydromethanopterin from 5,10-methenyl-5,6,7,8-tetrahydromethanopterin (hydrogen route): step 1/1. Functionally, catalyzes the reversible reduction of methenyl-H(4)MPT(+) to methylene-H(4)MPT. The polypeptide is 5,10-methenyltetrahydromethanopterin hydrogenase (Methanococcus vannielii (strain ATCC 35089 / DSM 1224 / JCM 13029 / OCM 148 / SB)).